A 41-amino-acid chain; its full sequence is GKIPIGAIKKAGKAIGKGLRAVNIASTAHDVYTFFKPKKRH.

Histidine 41 is subject to Histidine amide.

As to quaternary structure, monomer. In terms of tissue distribution, hemolymph.

It is found in the secreted. In terms of biological role, has antibacterial activity against Gram-positive and Gram-negative bacteria. The protein is Virescein of Heliothis virescens (Tobacco budworm moth).